Consider the following 1296-residue polypeptide: Capping protein, Arp2/3 and myosin-I linker protein 2 (1296 aa).

15 LRR repeats span residues 63 to 87, 88 to 110, 248 to 271, 273 to 296, 305 to 328, 363 to 386, 395 to 415, 426 to 448, 453 to 477, 480 to 506, 515 to 538, 542 to 565, 570 to 594, 598 to 621, and 836 to 859; these read DCTF…TFEL, ESLP…AQHV, ELVL…LAGH, NSGL…ALGR, DSTL…DSGG, CSSL…AAPA, TRML…ALRA, IHDL…VIQD, AGAL…VLAI, SRSL…VLHR, DCPL…LIRA, NPKL…MLAK, NTRL…VAQA, NHSL…RPEL, and TMAP…GLEE. Residues 507–601 form a tropomodulin-like region; it reads IAQLMQDDDC…AQALEQNHSL (95 aa). The interval 975-1002 is necessary for localization at the cell membrane; the sequence is ATPVPRTLRKKLGTLFAFKKPRSTRGPR. The segment at 988 to 1296 is disordered; that stretch reads TLFAFKKPRS…TDQRGGGPNP (309 aa). S1008 is subject to Phosphoserine. Basic and acidic residues-rich tracts occupy residues 1079–1091 and 1118–1134; these read RPDK…RGDT and ESKR…KAGS. Phosphoserine is present on S1134. A Phosphothreonine modification is found at T1145. Positions 1176-1185 are enriched in polar residues; that stretch reads TWKTLGQQLN. Residue R1191 is modified to Omega-N-methylarginine. 2 stretches are compositionally biased toward pro residues: residues 1199-1209 and 1267-1285; these read PGPPSPCPSPS and PLPP…PPSP. 2 positions are modified to phosphoserine: S1203 and S1281.

Belongs to the CARMIL family. Forms homodimers. Interacts (via C-terminus) with heterodimeric capping protein (CP); the interaction inhibits CP activity and hence promotes actin polymerization at the barbed end of actin filaments.

It is found in the cytoplasm. The protein resides in the cytoskeleton. It localises to the cell membrane. Its subcellular location is the cell projection. The protein localises to the lamellipodium. It is found in the ruffle. Its function is as follows. Cell membrane-cytoskeleton-associated protein that plays a role in the regulation of actin polymerization at the barbed end of actin filaments. Prevents F-actin heterodimeric capping protein (CP) activity at the leading edges of migrating cells, and hence generates uncapped barbed ends and enhances actin polymerization. Plays a role in cell protrusion formations; involved in cell polarity, lamellipodial assembly, membrane ruffling and macropinosome formations. Involved as well in cell migration and invadopodia formation during wound healing. Required for CD28-mediated stimulation of NF-kappa-B signaling, involved in naive T cells activation, maturation into T memory cells, and differentiation into T helper cells. Required for CD28-mediated differentiation of T regulatory cells. This is Capping protein, Arp2/3 and myosin-I linker protein 2 from Mus musculus (Mouse).